Reading from the N-terminus, the 172-residue chain is 3-hydroxydecanoyl-[acyl-carrier-protein] dehydratase (172 aa).

The active site involves His71.

Belongs to the thioester dehydratase family. FabA subfamily. Homodimer.

It localises to the cytoplasm. The enzyme catalyses a (3R)-hydroxyacyl-[ACP] = a (2E)-enoyl-[ACP] + H2O. It catalyses the reaction (3R)-hydroxydecanoyl-[ACP] = (2E)-decenoyl-[ACP] + H2O. It carries out the reaction (2E)-decenoyl-[ACP] = (3Z)-decenoyl-[ACP]. The protein operates within lipid metabolism; fatty acid biosynthesis. Its function is as follows. Necessary for the introduction of cis unsaturation into fatty acids. Catalyzes the dehydration of (3R)-3-hydroxydecanoyl-ACP to E-(2)-decenoyl-ACP and then its isomerization to Z-(3)-decenoyl-ACP. Can catalyze the dehydratase reaction for beta-hydroxyacyl-ACPs with saturated chain lengths up to 16:0, being most active on intermediate chain length. The sequence is that of 3-hydroxydecanoyl-[acyl-carrier-protein] dehydratase from Pectobacterium carotovorum subsp. carotovorum (strain PC1).